A 474-amino-acid chain; its full sequence is Bifunctional protein HldE (474 aa).

A ribokinase region spans residues 1-318 (MKLSMPRFDQ…RAVQREQGSE (318 aa)). 194–197 (NLSE) lines the ATP pocket. Asp263 is an active-site residue. The cytidylyltransferase stretch occupies residues 343 to 474 (FTNGCFDILH…AIVEKIRQKG (132 aa)).

In the N-terminal section; belongs to the carbohydrate kinase PfkB family. The protein in the C-terminal section; belongs to the cytidylyltransferase family. Homodimer.

It catalyses the reaction D-glycero-beta-D-manno-heptose 7-phosphate + ATP = D-glycero-beta-D-manno-heptose 1,7-bisphosphate + ADP + H(+). The catalysed reaction is D-glycero-beta-D-manno-heptose 1-phosphate + ATP + H(+) = ADP-D-glycero-beta-D-manno-heptose + diphosphate. It functions in the pathway nucleotide-sugar biosynthesis; ADP-L-glycero-beta-D-manno-heptose biosynthesis; ADP-L-glycero-beta-D-manno-heptose from D-glycero-beta-D-manno-heptose 7-phosphate: step 1/4. Its pathway is nucleotide-sugar biosynthesis; ADP-L-glycero-beta-D-manno-heptose biosynthesis; ADP-L-glycero-beta-D-manno-heptose from D-glycero-beta-D-manno-heptose 7-phosphate: step 3/4. The protein operates within bacterial outer membrane biogenesis; LPS core biosynthesis. In terms of biological role, catalyzes the phosphorylation of D-glycero-D-manno-heptose 7-phosphate at the C-1 position to selectively form D-glycero-beta-D-manno-heptose-1,7-bisphosphate. Catalyzes the ADP transfer from ATP to D-glycero-beta-D-manno-heptose 1-phosphate, yielding ADP-D-glycero-beta-D-manno-heptose. The sequence is that of Bifunctional protein HldE from Pseudomonas aeruginosa (strain ATCC 15692 / DSM 22644 / CIP 104116 / JCM 14847 / LMG 12228 / 1C / PRS 101 / PAO1).